A 179-amino-acid polypeptide reads, in one-letter code: SCAN domain-containing protein 1 (179 aa).

The segment at 1 to 107 (MAATEPILAT…AGSRLGPETF (107 aa)) is disordered. Low complexity predominate over residues 52 to 80 (SPNAAVPEAIPTPRAAASAALELPLGPAP). The SCAN box domain occupies 108 to 166 (RQRFRQFRYQDAAGPREAFRQLRELSRQWLRPDIRTKEQIVEMLVQEQLLAILPEAARA).

Interacts with ZNF202.

Its subcellular location is the nucleus. Functionally, may regulate transcriptional activity. In Pan paniscus (Pygmy chimpanzee), this protein is SCAN domain-containing protein 1 (SCAND1).